A 213-amino-acid polypeptide reads, in one-letter code: Heavy metal-binding protein HIP (213 aa).

Residues 80-213 (FKSHHVAFSA…MSTFTGFMLH (134 aa)) form the C1q domain.

Pallium, gill and liver.

The protein resides in the secreted. Functionally, binds heavy metals. May function as a carrier of divalent cations in plasma. The chain is Heavy metal-binding protein HIP from Mytilus edulis (Blue mussel).